Consider the following 438-residue polypeptide: MKDKLHWLAMHGVIRGIAAIGIRRGDLQARLIADPAVATDPVPFYDEVRSHGALVRNRANYLTVDHRLAHDLLRSDDFRVVSFGENLPPPLRWLERRTRGDQLHPLREPSLLAVEPPDHTRYRKTVSAVFTSRAVSALRDLVEQTAINLLDRFAEQPGIVDVVGRYCSQLPIVVISEILGVPEHDRPRVLEFGELAAPSLDIGIPWRQYLRVQQGIRGFDCWLEGHLQQLRHAPGDDLMSQLIQIAESGDNETQLDETELRAIAGLVLVAGFETTVNLLGNGIRMLLDTPEHLATLRQHPELWPNTVEEILRLDSPVQLTARVACRDVEVAGVRIKRGEVVVIYLAAANRDPAVFPDPHRFDIERPNAGRHLAFSTGRHFCLGAALARAEGEVGLRTFFDRFPDVRAAGAGSRRDTRVLRGWSTLPVTLGPARSMVSP.

Residue cysteine 381 coordinates heme.

Belongs to the cytochrome P450 family. Heme serves as cofactor.

This chain is Putative cytochrome P450 140 (cyp140), found in Mycobacterium bovis (strain ATCC BAA-935 / AF2122/97).